Here is a 133-residue protein sequence, read N- to C-terminus: Profilin-3 (133 aa).

Belongs to the profilin family. As to quaternary structure, occurs in many kinds of cells as a complex with monomeric actin in a 1:1 ratio.

It localises to the cytoplasm. Its subcellular location is the cytoskeleton. Functionally, binds to actin and affects the structure of the cytoskeleton. At high concentrations, profilin prevents the polymerization of actin, whereas it enhances it at low concentrations. By binding to PIP2, it inhibits the formation of IP3 and DG. The sequence is that of Profilin-3 (PRO3) from Nicotiana tabacum (Common tobacco).